The sequence spans 660 residues: Nuclear factor erythroid 2-related factor 3 (660 aa).

The interval 120–214 (SAVGDGGQSA…KTEEHKMACA (95 aa)) is disordered. Residues 123 to 135 (GDGGQSASAGGGD) are compositionally biased toward gly residues. Basic and acidic residues-rich tracts occupy residues 173 to 186 (MLRE…HSSQ) and 204 to 214 (SKTEEHKMACA). In terms of domain architecture, bZIP spans 541–604 (LIRDIRRRGK…DIMRQKLHGL (64 aa)). The interval 543-562 (RDIRRRGKNKVAAQNCRKRK) is basic motif. The segment at 566–573 (ILNLEDDI) is leucine-zipper.

The protein belongs to the bZIP family. CNC subfamily. In terms of assembly, heterodimer with MAFG, MAFK and other small MAF proteins that binds to the MAF recognition elements (MARE). In terms of tissue distribution, high level expression in brain, thymus, testis and placenta. Medium level expression in uterus, stomach and lung. Low level expression in kidney. No expression in heart, liver, spleen and ovary.

It is found in the nucleus. In terms of biological role, activates erythroid-specific, globin gene expression. The sequence is that of Nuclear factor erythroid 2-related factor 3 (Nfe2l3) from Mus musculus (Mouse).